A 580-amino-acid chain; its full sequence is Anaphase-promoting complex subunit 7 (580 aa).

10 TPR repeats span residues 50–83 (IISF…LFKV), 107–140 (YELK…SRGL), 141–175 (DTHL…CPLC), 253–286 (VLEK…DPYY), 321–354 (AETW…KESH), 356–388 (FAHS…SKNI), 390–421 (TARE…SPDY), 422–456 (SKTM…SPHC), 458–490 (DTVL…QETD), and 491–523 (LMHT…NPQY). Positions 539–580 (GIDPDQELDQENDDDDQEEGEGENDQEENDDDDNDDDDEYIS) are disordered. Residues 542–580 (PDQELDQENDDDDQEEGEGENDQEENDDDDNDDDDEYIS) are compositionally biased toward acidic residues.

It belongs to the APC7 family. As to quaternary structure, the APC/C is composed of at least 13 subunits that stay tightly associated throughout the cell cycle: anapc1, anapc2, anapc3, anapc4, anapc5, anapc6, anapc7, anapc8, anapc10, anapc11, cdc20, cdc26 and cdh1.

Its subcellular location is the nucleus. It participates in protein modification; protein ubiquitination. Its function is as follows. Component of the anaphase promoting complex/cyclosome (APC/C), a cell cycle-regulated E3 ubiquitin-protein ligase complex that controls progression through mitosis and the G1 phase of the cell cycle. In Dictyostelium discoideum (Social amoeba), this protein is Anaphase-promoting complex subunit 7 (anapc7).